Consider the following 289-residue polypeptide: MATIRWPAPAKLNLFLNVNGRRPDGYHELQTLFIFLDHGDWLEFEPLPDTDQLTLSPAIPGVPDEQNLIIRAARLLQARLPSPQGAHIRLEKLLPMGGGIGGGSSDAATTLVALNHLWQAGLGEDELAELGVQLGADVPVFVRGRAAFAEGVGERLQPVELPGAWYLVLKPDCHVATAAVFQDPDLPRATPKMAFHNLLEGEWKNDCELLVKKRYPEVANALGWLLEYAPSRMTGTGACVFAQFEDEKAAREVLAKVPKRWDGFVAKGENISPLFVTLQQISDWDIAKR.

Lys-11 is an active-site residue. Pro-95–Ser-105 is a binding site for ATP. Asp-137 is an active-site residue.

Belongs to the GHMP kinase family. IspE subfamily.

The catalysed reaction is 4-CDP-2-C-methyl-D-erythritol + ATP = 4-CDP-2-C-methyl-D-erythritol 2-phosphate + ADP + H(+). It functions in the pathway isoprenoid biosynthesis; isopentenyl diphosphate biosynthesis via DXP pathway; isopentenyl diphosphate from 1-deoxy-D-xylulose 5-phosphate: step 3/6. In terms of biological role, catalyzes the phosphorylation of the position 2 hydroxy group of 4-diphosphocytidyl-2C-methyl-D-erythritol. The chain is 4-diphosphocytidyl-2-C-methyl-D-erythritol kinase from Aeromonas salmonicida (strain A449).